The primary structure comprises 340 residues: Dihydroorotate dehydrogenase (quinone) (340 aa).

FMN-binding positions include 63–67 (AGLDK) and threonine 87. Lysine 67 is a substrate binding site. 112–116 (NRMGF) is a substrate binding site. FMN is bound by residues asparagine 140 and asparagine 173. Asparagine 173 is a binding site for substrate. Serine 176 serves as the catalytic Nucleophile. Residue asparagine 178 participates in substrate binding. 2 residues coordinate FMN: lysine 218 and threonine 246. Residue 247–248 (NT) participates in substrate binding. Residues glycine 269, glycine 298, and 319 to 320 (YT) each bind FMN.

The protein belongs to the dihydroorotate dehydrogenase family. Type 2 subfamily. As to quaternary structure, monomer. FMN serves as cofactor.

The protein localises to the cell membrane. The enzyme catalyses (S)-dihydroorotate + a quinone = orotate + a quinol. It functions in the pathway pyrimidine metabolism; UMP biosynthesis via de novo pathway; orotate from (S)-dihydroorotate (quinone route): step 1/1. Its function is as follows. Catalyzes the conversion of dihydroorotate to orotate with quinone as electron acceptor. In Methylococcus capsulatus (strain ATCC 33009 / NCIMB 11132 / Bath), this protein is Dihydroorotate dehydrogenase (quinone).